The following is a 98-amino-acid chain: Cystatin-A (98 aa).

N-acetylmethionine is present on methionine 1. Positions 46 to 50 match the Secondary area of contact motif; sequence QVVAG.

It belongs to the cystatin family.

It is found in the cytoplasm. In terms of biological role, this is an intracellular thiol proteinase inhibitor. This is Cystatin-A (CSTA) from Bos taurus (Bovine).